The following is a 384-amino-acid chain: Probable zinc-binding alcohol dehydrogenase Rv1895 (384 aa).

The Zn(2+) site is built by Cys38, His59, Cys89, Cys92, Cys95, and Cys103.

It belongs to the zinc-containing alcohol dehydrogenase family. It depends on Zn(2+) as a cofactor.

The catalysed reaction is a primary alcohol + NAD(+) = an aldehyde + NADH + H(+). The enzyme catalyses a secondary alcohol + NAD(+) = a ketone + NADH + H(+). In Mycobacterium tuberculosis (strain ATCC 25618 / H37Rv), this protein is Probable zinc-binding alcohol dehydrogenase Rv1895.